A 257-amino-acid chain; its full sequence is Type III pantothenate kinase (257 aa).

ATP is bound at residue 6–13 (EQGNTNTL). A substrate-binding site is contributed by 107 to 110 (GADR). D109 functions as the Proton acceptor in the catalytic mechanism. D129 provides a ligand contact to K(+). T132 contributes to the ATP binding site. Substrate is bound at residue T184.

This sequence belongs to the type III pantothenate kinase family. As to quaternary structure, homodimer. It depends on NH4(+) as a cofactor. K(+) is required as a cofactor.

It localises to the cytoplasm. It carries out the reaction (R)-pantothenate + ATP = (R)-4'-phosphopantothenate + ADP + H(+). It functions in the pathway cofactor biosynthesis; coenzyme A biosynthesis; CoA from (R)-pantothenate: step 1/5. In terms of biological role, catalyzes the phosphorylation of pantothenate (Pan), the first step in CoA biosynthesis. This is Type III pantothenate kinase from Phenylobacterium zucineum (strain HLK1).